The sequence spans 229 residues: Matrix protein (229 aa).

Positions Met1–Leu10 are enriched in low complexity. The tract at residues Met1–Ala23 is disordered. A dynamin binding motif is present at residues Ser2–Leu4. The PPXY motif signature appears at Pro24 to Tyr27. Positions Pro37–Pro40 match the PTAP/PSAP motif motif.

This sequence belongs to the vesiculoviruses matrix protein family. As to quaternary structure, homomultimer. Interacts with viral nucleocapsid; this interaction contributes to the virion assembly. Interacts with the viral envelope glycoprotein; this interaction contributes to the virion assembly. Interacts with host RAE1-NUP98 complex. Interacts with host NEDD4 and TSG101. Interacts with host dynamin. Interacts with host NDUFAF4; the interaction inhibits viral propagation and is independent of interferon activation. Interacts with host GTF2H5; the interaction may inhibit host transcription. In terms of processing, phosphorylated by host.

The protein resides in the virion. Its subcellular location is the host endomembrane system. It localises to the host nucleus membrane. It is found in the host nucleus. The protein localises to the host cytoplasm. In terms of biological role, forms a double layer around the helical nucleocapsid, the inner matrix layer binding to the N helix and the outer matrix layer binding to the envelope glycoprotein. Plays a major role in assembly and budding of virion, by recruiting cellular partners of the ESCRT complexes that play a key role in releasing the budding particle from the host membrane. Condensates the ribonucleocapsid core during virus assembly. Inhibits the host mRNA nuclear export thereby inducing the shut off of cellular transcription and preventing the interferon signaling and the establishment of antiviral state in infected cells. This shutoff presumably inhibits interferon signaling and thus establishment of antiviral state in virus infected cells. Induces cell-rounding, cytoskeleton disorganization and apoptosis in infected cell. Inhibits host transcription, possibly through interaction with host DNA repair factor IIH/TFIIH GTF2H5 subunit. The polypeptide is Matrix protein (M) (Vesicular stomatitis Indiana virus (strain San Juan) (VSIV)).